A 264-amino-acid polypeptide reads, in one-letter code: Thymidylate synthase (264 aa).

R21 is a binding site for dUMP. H51 provides a ligand contact to (6R)-5,10-methylene-5,6,7,8-tetrahydrofolate. 126-127 (RR) contributes to the dUMP binding site. The active-site Nucleophile is the C146. DUMP contacts are provided by residues 166–169 (RSAD), N177, and 207–209 (HLY). Residue D169 participates in (6R)-5,10-methylene-5,6,7,8-tetrahydrofolate binding. A263 lines the (6R)-5,10-methylene-5,6,7,8-tetrahydrofolate pocket.

It belongs to the thymidylate synthase family. Bacterial-type ThyA subfamily. In terms of assembly, homodimer.

It localises to the cytoplasm. It catalyses the reaction dUMP + (6R)-5,10-methylene-5,6,7,8-tetrahydrofolate = 7,8-dihydrofolate + dTMP. It functions in the pathway pyrimidine metabolism; dTTP biosynthesis. Catalyzes the reductive methylation of 2'-deoxyuridine-5'-monophosphate (dUMP) to 2'-deoxythymidine-5'-monophosphate (dTMP) while utilizing 5,10-methylenetetrahydrofolate (mTHF) as the methyl donor and reductant in the reaction, yielding dihydrofolate (DHF) as a by-product. This enzymatic reaction provides an intracellular de novo source of dTMP, an essential precursor for DNA biosynthesis. The polypeptide is Thymidylate synthase (Rhodopirellula baltica (strain DSM 10527 / NCIMB 13988 / SH1)).